The sequence spans 629 residues: Chaperone protein DnaK (629 aa).

The residue at position 195 (T195) is a Phosphothreonine; by autocatalysis. 2 disordered regions span residues 514-533 (EAEQNAEADRKRRERVEKRN) and 543-629 (LGQL…KPAE). The segment covering 555–590 (DAKDRLKAAADEAEEAVRSDDDSRIERAQKQLEEAM) has biased composition (basic and acidic residues). A compositionally biased stretch (low complexity) spans 595–614 (TAAQSGSQNQAGQGAQTQTG). Positions 615-629 (RQEDDVIDADFKPAE) are enriched in basic and acidic residues.

The protein belongs to the heat shock protein 70 family.

Its function is as follows. Acts as a chaperone. This Deinococcus geothermalis (strain DSM 11300 / CIP 105573 / AG-3a) protein is Chaperone protein DnaK.